The chain runs to 1278 residues: NPC intracellular cholesterol transporter 1 (1278 aa).

The signal sequence occupies residues Met-1–Ser-22. Over Gln-23–Thr-261 the chain is Lumenal. 9 disulfide bridges follow: Cys-25/Cys-74, Cys-31/Cys-42, Cys-63/Cys-109, Cys-75/Cys-113, Cys-97/Cys-238, Cys-100/Cys-160, Cys-177/Cys-184, Cys-227/Cys-243, and Cys-240/Cys-247. Cholesterol is bound at residue Asn-41. Asn-70 carries an N-linked (GlcNAc...) asparagine glycan. Gln-79 contacts cholesterol. Residues Asn-122 and Asn-135 are each glycosylated (N-linked (GlcNAc...) asparagine). Asn-158 carries N-linked (GlcNAc...) asparagine; atypical glycosylation. Residues Leu-175–Ile-205 form an important for cholesterol binding and cholesterol transfer from NPC1 to liposomes region. 2 N-linked (GlcNAc...) asparagine glycosylation sites follow: Asn-185 and Asn-222. The helical transmembrane segment at Ile-262–Val-282 threads the bilayer. Residues Phe-283–Pro-350 lie on the Cytoplasmic side of the membrane. A helical membrane pass occupies residues Gly-351 to Val-371. Topologically, residues Arg-372–Asp-620 are lumenal. 7 N-linked (GlcNAc...) asparagine glycosylation sites follow: Asn-452, Asn-459, Asn-478, Asn-524, Asn-557, Asn-572, and Asn-598. Intrachain disulfides connect Cys-468-Cys-479 and Cys-516-Cys-533. The SSD domain maps to Asp-620–Leu-785. A helical transmembrane segment spans residues Val-621 to His-641. Over Met-642–Lys-653 the chain is Cytoplasmic. A helical transmembrane segment spans residues Val-654–Phe-675. The Lumenal portion of the chain corresponds to Ser-676–Ile-685. The chain crosses the membrane as a helical span at residues Val-686–Val-706. The Cytoplasmic segment spans residues Gln-707–Glu-730. A helical membrane pass occupies residues Val-731–Leu-751. Over Ser-752 to Thr-759 the chain is Lumenal. The chain crosses the membrane as a helical span at residues Phe-760–Leu-783. At Gly-784–Asp-832 the chain is on the cytoplasmic side. A helical transmembrane segment spans residues Trp-833 to Leu-853. The Lumenal portion of the chain corresponds to Asn-854–Asp-1097. Cys-909 and Cys-914 are disulfide-bonded. 6 N-linked (GlcNAc...) asparagine glycosylation sites follow: Asn-916, Asn-931, Asn-961, Asn-968, Asn-1064, and Asn-1072. Cystine bridges form between Cys-956/Cys-1011, Cys-957/Cys-979, and Cys-967/Cys-976. A helical membrane pass occupies residues Thr-1098–Gly-1118. Residues Cys-1119–Ala-1124 are Cytoplasmic-facing. The chain crosses the membrane as a helical span at residues Val-1125–Trp-1145. Residues Gly-1146 to Asn-1150 lie on the Lumenal side of the membrane. The helical transmembrane segment at Ala-1151–Ile-1171 threads the bilayer. Topologically, residues Thr-1172–Met-1194 are cytoplasmic. A helical membrane pass occupies residues Gly-1195–Phe-1215. The Lumenal portion of the chain corresponds to Ala-1216–Ile-1223. A helical transmembrane segment spans residues Phe-1224–Leu-1244. Residues Pro-1245 to Phe-1278 are Cytoplasmic-facing. Residues Leu-1275–Phe-1278 are required for location in lysosomes. Residues Leu-1275–Phe-1278 carry the Di-leucine motif motif.

Belongs to the patched family. Interacts (via the second lumenal domain) with NPC2. Interacts with TMEM97; the interaction may decrease NPC1 availability to the cell. Interacts with TIM1. Interacts with SLC38A9; this interaction inhibits cholesterol-mediated mTORC1 activation via its sterol transport activity. In terms of assembly, (Microbial infection) Interacts with ebolavirus glycoprotein. In terms of processing, N-glycosylated.

It localises to the late endosome membrane. The protein resides in the lysosome membrane. The enzyme catalyses cholesterol(in) = cholesterol(out). In terms of biological role, intracellular cholesterol transporter which acts in concert with NPC2 and plays an important role in the egress of cholesterol from the endosomal/lysosomal compartment. Unesterified cholesterol that has been released from LDLs in the lumen of the late endosomes/lysosomes is transferred by NPC2 to the cholesterol-binding pocket in the N-terminal domain of NPC1. Cholesterol binds to NPC1 with the hydroxyl group buried in the binding pocket. Binds oxysterol with higher affinity than cholesterol. May play a role in vesicular trafficking in glia, a process that may be crucial for maintaining the structural and functional integrity of nerve terminals. Inhibits cholesterol-mediated mTORC1 activation throught its interaction with SLC38A9. Functionally, (Microbial infection) Acts as an endosomal entry receptor for ebolavirus. This is NPC intracellular cholesterol transporter 1 from Homo sapiens (Human).